A 351-amino-acid chain; its full sequence is Centromere-binding protein 1 (351 aa).

Methionine 1 carries the post-translational modification N-acetylmethionine. 3 stretches are compositionally biased toward polar residues: residues 1-10 (MNSLANNNKL), 43-52 (LLSQESNDGN), and 65-77 (KGTQSQYESGLTS). Disordered regions lie at residues 1–164 (MNSL…TQQS), 196–233 (KKDISMQPGRRGRKPTTLATTDEWKKQRKDSHKEVERR), and 327–351 (YEDMHTHKKQENERKSTRSDNPHEA). Serine 45 is modified (phosphoserine; by ATM or ATR). Phosphoserine is present on serine 48. At serine 84 the chain carries Phosphoserine. Composition is skewed to polar residues over residues 100–124 (VNYTDLIQGQEDSSDAHTSNQTNAN) and 138–164 (TPSNEGVKPNTSLEGMTSSPMESTQQS). At threonine 138 the chain carries Phosphothreonine. The bHLH domain maps to 222–270 (QRKDSHKEVERRRRENINTAINVLSDLLPVRESSKAAILACAAEYIQKL).

As to quaternary structure, binds DNA as a dimer. Associates with MET4 to form a heteromeric complex which also includes MET28.

It is found in the nucleus. The protein resides in the mitochondrion. The protein localises to the chromosome. Its subcellular location is the centromere. In terms of biological role, required for chromosome stability and methionine prototrophy. It is involved in chromosomal segregation. Binds to a highly conserved DNA sequence (5'-RTCACRTG-3'), called CDEI, found in centromeres and in several promoters. DNA-binding activity is enhanced by MET28. Required as an auxiliary factor for transcriptional activation of sulfur metabolism together with MET4 and MET28. This is Centromere-binding protein 1 (CBF1) from Saccharomyces cerevisiae (strain ATCC 204508 / S288c) (Baker's yeast).